The primary structure comprises 85 residues: Arminin 6494 (85 aa).

A signal peptide spans 1-18; sequence MKTVFAILFLAFIALTYA. The propeptide occupies 19 to 57; it reads RSYEDVKEEIKNEVEKEILEDLEEESDELNDKRKEINDA. Alanine 82 bears the Alanine amide mark.

The protein belongs to the arminin family. Expressed in entodermal epithelium along the body column.

The protein resides in the secreted. It is found in the target cell membrane. Its function is as follows. Antimicrobial peptide with a broad-spectrum antimicrobial activity. Keeps its antibacterial activity under a wide range of salt concentrations that mimic physiological conditions of human blood, which is surprising, since Hydra is an obligate freshwater animal with nearly no salt tolerance. Does not affect red blood cells. This chain is Arminin 6494, found in Hydra vulgaris (Hydra).